A 475-amino-acid chain; its full sequence is Bifunctional protein HldE (475 aa).

A ribokinase region spans residues 1–318 (MMQYSLKFNQ…ENAIHHREET (318 aa)). 195-198 (NMAE) provides a ligand contact to ATP. Residue Asp264 is part of the active site. Residues 344-475 (MTNGCFDILH…DVIKKIQAIR (132 aa)) form a cytidylyltransferase region.

The protein in the N-terminal section; belongs to the carbohydrate kinase PfkB family. This sequence in the C-terminal section; belongs to the cytidylyltransferase family. In terms of assembly, homodimer.

It carries out the reaction D-glycero-beta-D-manno-heptose 7-phosphate + ATP = D-glycero-beta-D-manno-heptose 1,7-bisphosphate + ADP + H(+). The catalysed reaction is D-glycero-beta-D-manno-heptose 1-phosphate + ATP + H(+) = ADP-D-glycero-beta-D-manno-heptose + diphosphate. It participates in nucleotide-sugar biosynthesis; ADP-L-glycero-beta-D-manno-heptose biosynthesis; ADP-L-glycero-beta-D-manno-heptose from D-glycero-beta-D-manno-heptose 7-phosphate: step 1/4. Its pathway is nucleotide-sugar biosynthesis; ADP-L-glycero-beta-D-manno-heptose biosynthesis; ADP-L-glycero-beta-D-manno-heptose from D-glycero-beta-D-manno-heptose 7-phosphate: step 3/4. It functions in the pathway bacterial outer membrane biogenesis; LOS core biosynthesis. In terms of biological role, catalyzes the phosphorylation of D-glycero-D-manno-heptose 7-phosphate at the C-1 position to selectively form D-glycero-beta-D-manno-heptose-1,7-bisphosphate. Functionally, catalyzes the ADP transfer from ATP to D-glycero-beta-D-manno-heptose 1-phosphate, yielding ADP-D-glycero-beta-D-manno-heptose. The chain is Bifunctional protein HldE from Haemophilus ducreyi (strain 35000HP / ATCC 700724).